Reading from the N-terminus, the 257-residue chain is NAD-capped RNA hydrolase NudC (257 aa).

Residue arginine 69 coordinates substrate. Positions 98 and 101 each coordinate Zn(2+). Glutamate 111 is a binding site for substrate. The Zn(2+) site is built by cysteine 116 and cysteine 119. Substrate is bound at residue tyrosine 124. The region spanning proline 125–threonine 248 is the Nudix hydrolase domain. Residues alanine 158, glutamate 174, and glutamate 178 each coordinate a divalent metal cation. Positions glycine 159 to arginine 180 match the Nudix box motif. Glutamine 192–serine 199 provides a ligand contact to substrate. Glutamate 219 provides a ligand contact to a divalent metal cation. Alanine 241 serves as a coordination point for substrate.

This sequence belongs to the Nudix hydrolase family. NudC subfamily. Homodimer. Requires Mg(2+) as cofactor. It depends on Mn(2+) as a cofactor. Zn(2+) serves as cofactor.

The catalysed reaction is a 5'-end NAD(+)-phospho-ribonucleoside in mRNA + H2O = a 5'-end phospho-adenosine-phospho-ribonucleoside in mRNA + beta-nicotinamide D-ribonucleotide + 2 H(+). It carries out the reaction NAD(+) + H2O = beta-nicotinamide D-ribonucleotide + AMP + 2 H(+). The enzyme catalyses NADH + H2O = reduced beta-nicotinamide D-ribonucleotide + AMP + 2 H(+). Its function is as follows. mRNA decapping enzyme that specifically removes the nicotinamide adenine dinucleotide (NAD) cap from a subset of mRNAs by hydrolyzing the diphosphate linkage to produce nicotinamide mononucleotide (NMN) and 5' monophosphate mRNA. The NAD-cap is present at the 5'-end of some mRNAs and stabilizes RNA against 5'-processing. Has preference for mRNAs with a 5'-end purine. Catalyzes the hydrolysis of a broad range of dinucleotide pyrophosphates. This is NAD-capped RNA hydrolase NudC from Edwardsiella ictaluri (strain 93-146).